Here is a 432-residue protein sequence, read N- to C-terminus: RNA binding protein fox-1 homolog 2 (432 aa).

Positions 1-21 are enriched in low complexity; it reads MAEGGQAQQQPPQLGPGAAAR. Residues 1–169 are disordered; the sequence is MAEGGQAQQQ…STPKRLHVSN (169 aa). Polar residues-rich tracts occupy residues 60-69 and 101-121; these read QGNQEPTTTP and YAGQ…PHGE. Residues 122–159 show a composition bias toward low complexity; the sequence is QSSNSPSNQNGSLTQTEGGAQTDGQQSQTQSSENSESK. In terms of domain architecture, RRM spans 163 to 239; that stretch reads KRLHVSNIPF…RKIEVNNATA (77 aa). Position 323 is an omega-N-methylarginine (arginine 323). 2 positions are modified to asymmetric dimethylarginine: arginine 339 and arginine 371. An asymmetric dimethylarginine; alternate mark is found at arginine 423 and arginine 428. An omega-N-methylarginine; alternate mark is found at arginine 423 and arginine 428.

As to quaternary structure, interacts with ER-alpha N-terminal activation domain. Interacts with RBPMS; the interaction allows cooperative assembly of stable cell-specific alternative splicing regulatory complexes.

The protein localises to the nucleus. Its subcellular location is the cytoplasm. In terms of biological role, RNA-binding protein that regulates alternative splicing events by binding to 5'-UGCAUGU-3' elements. Prevents binding of U2AF2 to the 3'-splice site. Regulates alternative splicing of tissue-specific exons and of differentially spliced exons during erythropoiesis. Seems to act as a coregulatory factor of ER-alpha. Together with RNA binding proteins RBPMS and MBNL1/2, activates vascular smooth muscle cells alternative splicing events. The chain is RNA binding protein fox-1 homolog 2 (Rbfox2) from Rattus norvegicus (Rat).